The following is a 111-amino-acid chain: Nucleoid-associated protein Clim_0875 (111 aa).

It belongs to the YbaB/EbfC family. Homodimer.

It localises to the cytoplasm. The protein localises to the nucleoid. Its function is as follows. Binds to DNA and alters its conformation. May be involved in regulation of gene expression, nucleoid organization and DNA protection. This Chlorobium limicola (strain DSM 245 / NBRC 103803 / 6330) protein is Nucleoid-associated protein Clim_0875.